The primary structure comprises 22 residues: Oxygen-evolving enhancer protein 2 (22 aa).

It belongs to the PsbP family.

It localises to the plastid. Its subcellular location is the chloroplast thylakoid membrane. Functionally, may be involved in the regulation of photosystem II. The chain is Oxygen-evolving enhancer protein 2 from Physcomitrium patens (Spreading-leaved earth moss).